A 233-amino-acid polypeptide reads, in one-letter code: Tetrahydromethanopterin S-methyltransferase subunit D (233 aa).

The next 6 helical transmembrane spans lie at 4-24 (LLLI…VHFV), 39-59 (VGTG…ITAA), 67-87 (LMIM…TMLV), 133-153 (FVSG…IYWA), 166-186 (MGAA…NAVI), and 209-229 (GIVA…LLVY).

This sequence belongs to the MtrD family. As to quaternary structure, the complex is composed of 8 subunits; MtrA, MtrB, MtrC, MtrD, MtrE, MtrF, MtrG and MtrH.

Its subcellular location is the cell membrane. It carries out the reaction 5-methyl-5,6,7,8-tetrahydromethanopterin + coenzyme M + 2 Na(+)(in) = 5,6,7,8-tetrahydromethanopterin + methyl-coenzyme M + 2 Na(+)(out). Its pathway is one-carbon metabolism; methanogenesis from CO(2); methyl-coenzyme M from 5,10-methylene-5,6,7,8-tetrahydromethanopterin: step 2/2. Its function is as follows. Part of a complex that catalyzes the formation of methyl-coenzyme M and tetrahydromethanopterin from coenzyme M and methyl-tetrahydromethanopterin. This is an energy-conserving, sodium-ion translocating step. The chain is Tetrahydromethanopterin S-methyltransferase subunit D from Methanothermobacter marburgensis (strain ATCC BAA-927 / DSM 2133 / JCM 14651 / NBRC 100331 / OCM 82 / Marburg) (Methanobacterium thermoautotrophicum).